The sequence spans 211 residues: ATP phosphoribosyltransferase (211 aa).

Belongs to the ATP phosphoribosyltransferase family. Short subfamily. In terms of assembly, heteromultimer composed of HisG and HisZ subunits.

The protein localises to the cytoplasm. The catalysed reaction is 1-(5-phospho-beta-D-ribosyl)-ATP + diphosphate = 5-phospho-alpha-D-ribose 1-diphosphate + ATP. The protein operates within amino-acid biosynthesis; L-histidine biosynthesis; L-histidine from 5-phospho-alpha-D-ribose 1-diphosphate: step 1/9. Its function is as follows. Catalyzes the condensation of ATP and 5-phosphoribose 1-diphosphate to form N'-(5'-phosphoribosyl)-ATP (PR-ATP). Has a crucial role in the pathway because the rate of histidine biosynthesis seems to be controlled primarily by regulation of HisG enzymatic activity. This Pseudomonas fluorescens (strain Pf0-1) protein is ATP phosphoribosyltransferase.